Consider the following 146-residue polypeptide: P antigen family member 1 (146 aa).

The tract at residues 16–146 is disordered; it reads YVESSEESSD…PEEDEGQSQP (131 aa). Residues 19–32 are compositionally biased toward acidic residues; that stretch reads SSEESSDEQPDEVE. The residue at position 63 (Ser63) is a Phosphoserine. Residues 79–92 are compositionally biased toward basic and acidic residues; it reads PDTKRVCLRNEEQM. Ser105 is subject to Phosphoserine. Basic and acidic residues predominate over residues 107–120; sequence EQVHPKTGCERGDG. Ser144 bears the Phosphoserine mark.

This sequence belongs to the GAGE family. As to expression, isolated from prostate cancer cell lines; expression associated with progression to androgen insensitive phenotype. Expressed in normal testis and at lower level in normal placenta.

This chain is P antigen family member 1 (PAGE1), found in Homo sapiens (Human).